A 208-amino-acid polypeptide reads, in one-letter code: Uracil phosphoribosyltransferase (208 aa).

5-phospho-alpha-D-ribose 1-diphosphate contacts are provided by residues arginine 78, arginine 103, and 130–138; that span reads DPMLATGGS. Residues isoleucine 193 and 198 to 200 each bind uracil; that span reads GDA. Aspartate 199 serves as a coordination point for 5-phospho-alpha-D-ribose 1-diphosphate.

Belongs to the UPRTase family. Mg(2+) serves as cofactor.

It catalyses the reaction UMP + diphosphate = 5-phospho-alpha-D-ribose 1-diphosphate + uracil. It functions in the pathway pyrimidine metabolism; UMP biosynthesis via salvage pathway; UMP from uracil: step 1/1. Allosterically activated by GTP. Its function is as follows. Catalyzes the conversion of uracil and 5-phospho-alpha-D-ribose 1-diphosphate (PRPP) to UMP and diphosphate. The polypeptide is Uracil phosphoribosyltransferase (Photobacterium profundum (strain SS9)).